A 469-amino-acid polypeptide reads, in one-letter code: C4b-binding protein (469 aa).

The N-terminal stretch at 1–56 is a signal peptide; sequence MCAKQQQTLLPTRAAHGRLHRNRDAVAWPFSTLCRVSGPTLFQMTFTAALWVAVFG. Sushi domains are found at residues 57 to 117, 118 to 178, 179 to 242, 243 to 301, 302 to 357, and 358 to 415; these read KCGP…SCAK, KHCR…ECVI, VKCG…TCEK, IICS…TCEF, DCDL…QCKA, and LCQK…RCEQ. Intrachain disulfides connect cysteine 58–cysteine 103, cysteine 88–cysteine 115, cysteine 120–cysteine 160, cysteine 146–cysteine 176, cysteine 181–cysteine 223, cysteine 209–cysteine 240, cysteine 245–cysteine 287, cysteine 273–cysteine 299, cysteine 303–cysteine 343, cysteine 329–cysteine 355, cysteine 359–cysteine 400, and cysteine 386–cysteine 413. The N-linked (GlcNAc...) asparagine glycan is linked to asparagine 74. Asparagine 227, asparagine 275, and asparagine 292 each carry an N-linked (GlcNAc...) asparagine glycan. Asparagine 366 and asparagine 381 each carry an N-linked (GlcNAc...) asparagine glycan. Asparagine 428 is a glycosylation site (N-linked (GlcNAc...) asparagine).

As to quaternary structure, homoheptamer; not covalently linked. Mouse lacks the beta chain of C4BP.

It is found in the secreted. In terms of biological role, controls the classical pathway of complement activation. It binds as a cofactor to C3b/C4b inactivator (C3bINA), which then hydrolyzes the complement fragment C4b. It also accelerates the degradation of the C4bC2a complex (C3 convertase) by dissociating the complement fragment C2a. Alpha chain binds C4b. It also interacts with serum amyloid P component. This is C4b-binding protein (C4bpa) from Mus musculus (Mouse).